The sequence spans 163 residues: ATP synthase subunit b 1 (163 aa).

Residues 7 to 27 (AETWVAVAFVILMALFAYLGV) form a helical membrane-spanning segment.

The protein belongs to the ATPase B chain family. In terms of assembly, F-type ATPases have 2 components, F(1) - the catalytic core - and F(0) - the membrane proton channel. F(1) has five subunits: alpha(3), beta(3), gamma(1), delta(1), epsilon(1). F(0) has three main subunits: a(1), b(2) and c(10-14). The alpha and beta chains form an alternating ring which encloses part of the gamma chain. F(1) is attached to F(0) by a central stalk formed by the gamma and epsilon chains, while a peripheral stalk is formed by the delta and b chains.

The protein localises to the cell inner membrane. Functionally, f(1)F(0) ATP synthase produces ATP from ADP in the presence of a proton or sodium gradient. F-type ATPases consist of two structural domains, F(1) containing the extramembraneous catalytic core and F(0) containing the membrane proton channel, linked together by a central stalk and a peripheral stalk. During catalysis, ATP synthesis in the catalytic domain of F(1) is coupled via a rotary mechanism of the central stalk subunits to proton translocation. Component of the F(0) channel, it forms part of the peripheral stalk, linking F(1) to F(0). This chain is ATP synthase subunit b 1, found in Rhodopseudomonas palustris (strain BisB5).